The primary structure comprises 241 residues: Probable xyloglucan-specific endo-beta-1,4-glucanase A (241 aa).

The first 18 residues, 1 to 18, serve as a signal peptide directing secretion; the sequence is MKFNLALALSLTVATAEA.

The protein belongs to the glycosyl hydrolase 12 (cellulase H) family.

It is found in the secreted. The catalysed reaction is xyloglucan + H2O = xyloglucan oligosaccharides.. Catalyzes endohydrolysis of 1,4-beta-D-glucosidic linkages in xyloglucan with retention of the beta-configuration of the glycosyl residues. Specific for xyloglucan and does not hydrolyze other cell wall components. The sequence is that of Probable xyloglucan-specific endo-beta-1,4-glucanase A (xgeA) from Aspergillus clavatus (strain ATCC 1007 / CBS 513.65 / DSM 816 / NCTC 3887 / NRRL 1 / QM 1276 / 107).